Consider the following 153-residue polypeptide: Cytochrome c-type biogenesis protein CcmE (153 aa).

At 1 to 7 (MTRKKRR) the chain is on the cytoplasmic side. A helical; Signal-anchor for type II membrane protein membrane pass occupies residues 8–28 (LYFVVLGMLALFAAAGLTLTA). The Periplasmic portion of the chain corresponds to 29-153 (FQDNLVFFYS…PPTAAAAPAP (125 aa)). Heme contacts are provided by H121 and Y125. A disordered region spans residues 132–153 (ESLKASGKWQHGPPTAAAAPAP). A compositionally biased stretch (low complexity) spans 144–153 (PPTAAAAPAP).

This sequence belongs to the CcmE/CycJ family.

The protein resides in the cell inner membrane. Functionally, heme chaperone required for the biogenesis of c-type cytochromes. Transiently binds heme delivered by CcmC and transfers the heme to apo-cytochromes in a process facilitated by CcmF and CcmH. The polypeptide is Cytochrome c-type biogenesis protein CcmE (Rhodospirillum rubrum (strain ATCC 11170 / ATH 1.1.1 / DSM 467 / LMG 4362 / NCIMB 8255 / S1)).